The sequence spans 562 residues: Protein wntless (562 aa).

The Cytoplasmic segment spans residues 1–13 (MSGTILENLSGRK). Residues 14–34 (LSILVGSLLLCQVLCFLLGGL) form a helical membrane-spanning segment. Residues 35–239 (YAPVPAGHTN…AIHQNGGFTH (205 aa)) lie on the Lumenal side of the membrane. The N-linked (GlcNAc...) asparagine glycan is linked to N58. The chain crosses the membrane as a helical span at residues 240-260 (VWLMLKTLLFPFVVGIMVWFW). Residues 261 to 270 (RRVHLLQRSP) lie on the Cytoplasmic side of the membrane. A helical membrane pass occupies residues 271 to 291 (ALLEYMLLYLGGALTFLNLPL). Residues 292–311 (EYLSLTIEMPYMLLLSDIRQ) are Lumenal-facing. Residues 312–332 (GIFYAMLLSFWLVFAGEHMLI) form a helical membrane-spanning segment. Topologically, residues 333 to 344 (QDSHNKSTIRSR) are cytoplasmic. The helical transmembrane segment at 345–365 (YWKHLSAVVVGCISLFVFDIS) threads the bilayer. At 366-386 (ERGVQLRNPFYSIWTTPLGAK) the chain is on the lumenal side. The chain crosses the membrane as a helical span at residues 387–407 (VAMSFILLAGVSAAVYFLFLC). Over 408-441 (YMISKVFKNIGDKRTSLPSMSQARRLHYEGLIYR) the chain is Cytoplasmic. A helical membrane pass occupies residues 442–462 (FKFLMLATLLCAALTVTGFIM). Topologically, residues 463–482 (GQMAEGQWKWNDDVEIQLTS) are lumenal. The helical transmembrane segment at 483–503 (AFLTGVYGMWNIYIFALLILY) threads the bilayer. At 504–562 (APSHKQWPTMHHSDETTQSNENIVASAASEEIEFSNLPSDSNPSEISSLTSFTRKVAFE) the chain is on the cytoplasmic side. A disordered region spans residues 538–562 (SNLPSDSNPSEISSLTSFTRKVAFE). The segment covering 539–556 (NLPSDSNPSEISSLTSFT) has biased composition (polar residues).

The protein belongs to the wntless family. As to quaternary structure, interacts with wg; in the Golgi. Interacts with Vps35, a component of the retromer complex; wls stability is regulated by Vps35.

It localises to the presynaptic cell membrane. It is found in the postsynaptic cell membrane. The protein resides in the cell membrane. The protein localises to the endoplasmic reticulum membrane. Its subcellular location is the endosome membrane. It localises to the golgi apparatus membrane. Its function is as follows. A segment polarity gene required for wingless (wg)-dependent patterning processes, acting in both wg-sending cells and wg-target cells. In non-neuronal cells wls directs wg secretion. The wls traffic loop encompasses the Golgi, the cell surface, an endocytic compartment and a retrograde route leading back to the Golgi, and involves clathrin-mediated endocytosis and the retromer complex (a conserved protein complex consisting of Vps35 and Vps26). In neuronal cells (the larval motorneuron NMJ), the wg signal moves across the synapse via the release of wls-containing exosome-like vesicles. Postsynaptic wls is required for the trafficking of fz2 through the fz2-interacting protein Grip. The sequence is that of Protein wntless from Drosophila persimilis (Fruit fly).